The chain runs to 233 residues: uncharacterized protein (233 aa).

7 residues coordinate Zn(2+): His-64, His-66, Asp-68, His-69, His-143, Asp-162, and His-212.

The protein belongs to the metallo-beta-lactamase superfamily. Glyoxalase II family. It depends on Zn(2+) as a cofactor.

This is an uncharacterized protein from Bacillus subtilis (strain 168).